The chain runs to 162 residues: Ecotin (162 aa).

Positions 1-18 are cleaved as a signal peptide; it reads MKMFVPAVVFAASASAWA. Cys-70 and Cys-107 are joined by a disulfide.

The protein belongs to the protease inhibitor I11 (ecotin) family. In terms of assembly, homodimer.

The protein localises to the periplasm. In terms of biological role, general inhibitor of pancreatic serine proteases: inhibits chymotrypsin, trypsin, elastases, factor X, kallikrein as well as a variety of other proteases. This is Ecotin from Salmonella arizonae (strain ATCC BAA-731 / CDC346-86 / RSK2980).